Consider the following 406-residue polypeptide: MLKNKTFGSALIIAGTTIGAGMLAMPLTSAGMGFGYTLLLLVGLWALLVYSGLLFVEVYQTADQLDDGVATLAEKYFGVPGRIFATLSLLVLLYALSAAYITGGGSLLSGLPTAFGMEAMSLKTAIIIFTVVLGSFVVVGTKGVDGLTRVLFIGKLIAFAFVLFMMLPKVATDNLMALPLDYAFVVSAAPIFLTSFGFHVIMASVNSYLGGSVDKFRRAILIGTAIPLAAYLVWQLATHGVLSQSEFVRILQADPTLNGLVNATREITGSHFMGEVVRVFSSLALITSFLGVMLGVFEGLGDLFKRYHLPNNRFVLTIAAFLPPLVFALFYPEGFITALSYAGLLCAFYCLILPISLAWRTRIENPTLPYRVAGGNFALVLALLIGVVIMLIPFLIQWGYLPVVAG.

The next 11 membrane-spanning stretches (helical) occupy residues 7–27 (FGSA…AMPL), 38–58 (LLLL…FVEV), 83–103 (IFAT…YITG), 119–139 (AMSL…FVVV), 150–170 (VLFI…LPKV), 183–203 (AFVV…VIMA), 219–239 (AILI…LATH), 279–299 (VFSS…VFEG), 314–334 (FVLT…YPEG), 335–355 (FITA…ILPI), and 376–396 (NFAL…PFLI).

This sequence belongs to the amino acid/polyamine transporter 2 family. Mtr/TnaB/TyrP permease subfamily.

The protein resides in the cell inner membrane. The enzyme catalyses L-tyrosine(in) + H(+)(in) = L-tyrosine(out) + H(+)(out). Its function is as follows. Transports tyrosine across the cytoplasmic membrane. The transport system is energized by the proton motive force. In Haemophilus influenzae (strain ATCC 51907 / DSM 11121 / KW20 / Rd), this protein is Tyrosine-specific transport system 2 (tyrP-B).